The chain runs to 108 residues: Small ribosomal subunit protein uS17 (108 aa).

This sequence belongs to the universal ribosomal protein uS17 family. In terms of assembly, part of the 30S ribosomal subunit.

Its function is as follows. One of the primary rRNA binding proteins, it binds specifically to the 5'-end of 16S ribosomal RNA. The sequence is that of Small ribosomal subunit protein uS17 from Methanoregula boonei (strain DSM 21154 / JCM 14090 / 6A8).